A 230-amino-acid polypeptide reads, in one-letter code: uncharacterized protein (230 aa).

Positions 2 to 230 (IQLSNVRKSY…ASSGQRSVGE (229 aa)) constitute an ABC transporter domain. An ATP-binding site is contributed by 38-45 (GPSGSGKS).

The protein belongs to the ABC transporter superfamily. In terms of assembly, part of a complex composed of YknX, YknY and YknZ. The complex interacts with YknW.

It localises to the cell membrane. Part of an unusual four-component transporter, which is required for protection against the killing factor SdpC (sporulation-delaying protein). This is an uncharacterized protein from Bacillus subtilis (strain 168).